Here is a 1400-residue protein sequence, read N- to C-terminus: Macrophage-stimulating protein receptor (1400 aa).

Residues 1-24 (MELLPPLPQSFLLLLLLPAKPAAG) form the signal peptide. Residues 25-957 (EDWQCPRTPY…PGPDGVPQST (933 aa)) lie on the Extracellular side of the membrane. Residues 31 to 522 (RTPYAASRDF…SGDQVFQVPI (492 aa)) form the Sema domain. An N-linked (GlcNAc...) asparagine glycan is attached at N66. 7 disulfides stabilise this stretch: C101-C104, C107-C162, C135-C143, C174-C177, C300-C367, C385-C407, and C386-C422. N-linked (GlcNAc...) asparagine glycosylation is found at N419, N458, and N488. 4 cysteine pairs are disulfide-bonded: C527/C545, C533/C567, C536/C552, and C548/C558. IPT/TIG domains are found at residues 569 to 671 (PKLT…FRVD), 684 to 767 (PVLI…FQYR), and 770 to 860 (PVVL…FRFL). 4 N-linked (GlcNAc...) asparagine glycosylation sites follow: N654, N720, N841, and N897. Residues 958–978 (LLGILLPLLLLVAALATALVF) form a helical membrane-spanning segment. Residues 979-1400 (SYWWRRKQLV…RPLSEPPRPT (422 aa)) are Cytoplasmic-facing. The Protein kinase domain maps to 1082–1345 (THSDRVIGKG…VLVGEVEQIV (264 aa)). ATP is bound by residues 1088–1096 (IGKGHFGVV), K1114, and 1161–1164 (LPYM). D1208 functions as the Proton acceptor in the catalytic mechanism. R1212 is a binding site for ATP. A phosphotyrosine; by autocatalysis mark is found at Y1238, Y1239, Y1353, and Y1360. The interval 1367-1400 (TSHEMNVRPEQPQFSPMPGNVRRPRPLSEPPRPT) is disordered.

The protein belongs to the protein kinase superfamily. Tyr protein kinase family. As to quaternary structure, heterodimer of an alpha chain and a beta chain which are disulfide linked. Binds PLXNB1. Associates with and is negatively regulated by HYAL2. Interacts when phosphorylated with downstream effectors including PIK3R1, PCLG1, GRB2 and GAB1. Interacts with integrin beta1/ITGB1 in a ligand-independent fashion. Proteolytic processing yields the two subunits. Post-translationally, autophosphorylated in response to ligand binding on Tyr-1238 and Tyr-1239 in the kinase domain leading to further phosphorylation of Tyr-1353 and Tyr-1360 in the C-terminal multifunctional docking site. In terms of processing, ubiquitinated. Ubiquitination by CBL regulates the receptor stability and activity through proteasomal degradation. O-mannosylation of IPT/TIG domains on Thr or Ser residues by TMEM260 is required for protein maturation. O-mannosylated residues are composed of single mannose glycans that are not elongated or modified. As to expression, expressed in colon, skin, lung and bone marrow.

It is found in the membrane. It catalyses the reaction L-tyrosyl-[protein] + ATP = O-phospho-L-tyrosyl-[protein] + ADP + H(+). With respect to regulation, in its inactive state, the C-terminal tail interacts with the catalytic domain and inhibits the kinase activity. Upon ligand binding, the C-terminal tail is displaced and becomes phosphorylated, thus increasing the kinase activity. Receptor tyrosine kinase that transduces signals from the extracellular matrix into the cytoplasm by binding to MST1 ligand. Regulates many physiological processes including cell survival, migration and differentiation. Ligand binding at the cell surface induces autophosphorylation of RON on its intracellular domain that provides docking sites for downstream signaling molecules. Following activation by ligand, interacts with the PI3-kinase subunit PIK3R1, PLCG1 or the adapter GAB1. Recruitment of these downstream effectors by RON leads to the activation of several signaling cascades including the RAS-ERK, PI3 kinase-AKT, or PLCgamma-PKC. RON signaling activates the wound healing response by promoting epithelial cell migration, proliferation as well as survival at the wound site. Also plays a role in the innate immune response by regulating the migration and phagocytic activity of macrophages. Alternatively, RON can also promote signals such as cell migration and proliferation in response to growth factors other than MST1 ligand. This is Macrophage-stimulating protein receptor (MST1R) from Homo sapiens (Human).